Reading from the N-terminus, the 211-residue chain is Probable GTP-binding protein EngB (211 aa).

Residues 30-204 enclose the EngB-type G domain; the sequence is EGFEVAFAGR…YTVLAGWMEL (175 aa). Residues 38–45, 64–68, 82–85, 149–152, and 182–185 contribute to the GTP site; these read GRSNAGKS, GRTQL, DLPG, TKAD, and LFSA. Residues serine 45 and threonine 66 each coordinate Mg(2+).

It belongs to the TRAFAC class TrmE-Era-EngA-EngB-Septin-like GTPase superfamily. EngB GTPase family. Mg(2+) serves as cofactor.

Functionally, necessary for normal cell division and for the maintenance of normal septation. This is Probable GTP-binding protein EngB from Pseudomonas syringae pv. tomato (strain ATCC BAA-871 / DC3000).